The chain runs to 461 residues: Dihydrolipoyl dehydrogenase (461 aa).

FAD contacts are provided by residues 33-41 (EAAEVGGVC), lysine 50, and alanine 112. A disulfide bond links cysteine 41 and cysteine 46. NAD(+) is bound by residues 173–177 (GGGAV), glutamate 196, and 263–266 (AVGR). FAD-binding residues include aspartate 306 and alanine 314. Histidine 437 functions as the Proton acceptor in the catalytic mechanism.

It belongs to the class-I pyridine nucleotide-disulfide oxidoreductase family. As to quaternary structure, homodimer. It depends on FAD as a cofactor.

The protein resides in the membrane. It carries out the reaction N(6)-[(R)-dihydrolipoyl]-L-lysyl-[protein] + NAD(+) = N(6)-[(R)-lipoyl]-L-lysyl-[protein] + NADH + H(+). Functionally, has chromate reductase activity. In Thermus scotoductus (strain ATCC 700910 / SA-01), this protein is Dihydrolipoyl dehydrogenase.